Reading from the N-terminus, the 971-residue chain is UPF0182 protein CMS1887 (971 aa).

The next 7 helical transmembrane spans lie at 16–36 (LAIT…FAGF), 56–76 (WGAG…PVFV), 108–128 (LAMF…ASSG), 161–181 (FYHA…LGVL), 205–225 (IQIA…IWLD), 255–275 (TILA…AAIG), and 281–301 (IIGT…YPAI). Residues 687 to 702 (QDLWTTPNDPTATTEA) are compositionally biased toward polar residues. Disordered stretches follow at residues 687–706 (QDLW…GTPA) and 874–924 (GATA…AQDV). 2 stretches are compositionally biased toward low complexity: residues 884 to 900 (PTTP…TDGA) and 907 to 921 (STPT…AAPA).

Belongs to the UPF0182 family.

The protein resides in the cell membrane. This chain is UPF0182 protein CMS1887, found in Clavibacter sepedonicus (Clavibacter michiganensis subsp. sepedonicus).